A 202-amino-acid polypeptide reads, in one-letter code: Small ribosomal subunit protein uS4 (202 aa).

Residues serine 91–aspartate 168 form the S4 RNA-binding domain.

It belongs to the universal ribosomal protein uS4 family. As to quaternary structure, part of the 30S ribosomal subunit. Contacts protein S5. The interaction surface between S4 and S5 is involved in control of translational fidelity.

One of the primary rRNA binding proteins, it binds directly to 16S rRNA where it nucleates assembly of the body of the 30S subunit. Its function is as follows. With S5 and S12 plays an important role in translational accuracy. This chain is Small ribosomal subunit protein uS4, found in Ehrlichia ruminantium (strain Welgevonden).